The sequence spans 305 residues: tRNA pseudouridine synthase B (305 aa).

Catalysis depends on Asp39, which acts as the Nucleophile.

The protein belongs to the pseudouridine synthase TruB family. Type 1 subfamily.

It carries out the reaction uridine(55) in tRNA = pseudouridine(55) in tRNA. Responsible for synthesis of pseudouridine from uracil-55 in the psi GC loop of transfer RNAs. This chain is tRNA pseudouridine synthase B, found in Staphylococcus aureus (strain MRSA252).